Reading from the N-terminus, the 470-residue chain is MDILCEENTSLSSTTNSLMQLHADTRLYSTDFNSGEGNTSNAFNWTVDSENRTNLSCEGCLSPPCFSLLHLQEKNWSALLTAVVIILTIAGNILVIMAVSLEKKLQNATNYFLMSLAIADMLLGFLVMPVSTLTILYGYRWPLPSKLCAVWIYLDVLFSTASIMHLCAISLDRYVAIQNPIHHSRFNSRTKAFLKIIAVWTISVGISMPIPVFGLQDDSKVFKEGSCLLADENFVLIGSFVAFFIPLTIMVITYFLTIKSLQKEATLCVSDPGTRTKLASFSFLPQSSLSSEKLFQRSIHREPGSYGRRTMQSISNEQKACKVLGIVFFLFVVMWCPFFITNIMAVICKESCNRDVIEALLNVFVWIGYLSSAVNPLVYTLFNKTYRSAFSRYIQCQYKENKKPLQLILVNTIPALAYKSSQLQMGPKKNSKKDDKTTDNDCTMVALGKEHPEDAPADSSNTVNEKVSCV.

At 1-80 (MDILCEENTS…LQEKNWSALL (80 aa)) the chain is on the extracellular side. Asn38 carries N-linked (GlcNAc...) asparagine glycosylation. A helical transmembrane segment spans residues 81–97 (TAVVIILTIAGNILVIM). Over 98-111 (AVSLEKKLQNATNY) the chain is Cytoplasmic. A helical transmembrane segment spans residues 112 to 137 (FLMSLAIADMLLGFLVMPVSTLTILY). The Extracellular portion of the chain corresponds to 138-146 (GYRWPLPSK). The chain crosses the membrane as a helical span at residues 147-171 (LCAVWIYLDVLFSTASIMHLCAISL). Cys148 and Cys227 are disulfide-bonded. Asp155 lines the serotonin pocket. The short motif at 172-174 (DRY) is the DRY motif; important for ligand-induced conformation changes element. The Cytoplasmic segment spans residues 172–191 (DRYVAIQNPIHHSRFNSRTK). Residues 192-215 (AFLKIIAVWTISVGISMPIPVFGL) traverse the membrane as a helical segment. At 216 to 232 (QDDSKVFKEGSCLLADE) the chain is on the extracellular side. Residues 233–258 (NFVLIGSFVAFFIPLTIMVITYFLTI) traverse the membrane as a helical segment. The Cytoplasmic segment spans residues 259-321 (KSLQKEATLC…QSISNEQKAC (63 aa)). Ser280 is subject to Phosphoserine. A helical membrane pass occupies residues 322–347 (KVLGIVFFLFVVMWCPFFITNIMAVI). Serotonin is bound at residue Asn342. A disulfide bond links Cys348 and Cys352. The Extracellular segment spans residues 348-355 (CKESCNRD). Residues 356–381 (VIEALLNVFVWIGYLSSAVNPLVYTL) form a helical membrane-spanning segment. An NPxxY motif; important for ligand-induced conformation changes and signaling motif is present at residues 375 to 379 (NPLVY). The Cytoplasmic segment spans residues 382–470 (FNKTYRSAFS…NTVNEKVSCV (89 aa)). A disordered region spans residues 424–470 (QMGPKKNSKKDDKTTDNDCTMVALGKEHPEDAPADSSNTVNEKVSCV). Over residues 458–470 (DSSNTVNEKVSCV) the composition is skewed to polar residues. Residues 468–470 (SCV) carry the PDZ-binding motif.

This sequence belongs to the G-protein coupled receptor 1 family. As to quaternary structure, interacts (via C-terminus) with MPDZ and PATJ. May interact (via C-terminus) with MPP3, PRDX6, DLG4, DLG1, CASK, APBA1 and MAGI2. Interacts with GRM2 and DRD2; this may affect signaling.

Its subcellular location is the cell membrane. It is found in the cell projection. It localises to the dendrite. The protein resides in the axon. The protein localises to the cytoplasmic vesicle. Its subcellular location is the membrane. It is found in the caveola. It localises to the presynapse. Its activity is regulated as follows. G-protein coupled receptor activity is regulated by lipids: oleamide increases HTR2A-mediated activity. In terms of biological role, G-protein coupled receptor for 5-hydroxytryptamine (serotonin). Also functions as a receptor for various drugs and psychoactive substances, including mescaline, psilocybin, 1-(2,5-dimethoxy-4-iodophenyl)-2-aminopropane (DOI) and lysergic acid diethylamide (LSD). Ligand binding causes a conformation change that triggers signaling via guanine nucleotide-binding proteins (G proteins) and modulates the activity of downstream effectors. HTR2A is coupled to G(q)/G(11) G alpha proteins and activates phospholipase C-beta, releasing diacylglycerol (DAG) and inositol 1,4,5-trisphosphate (IP3) second messengers that modulate the activity of phosphatidylinositol 3-kinase and promote the release of Ca(2+) ions from intracellular stores, respectively. Beta-arrestin family members inhibit signaling via G proteins and mediate activation of alternative signaling pathways. Affects neural activity, perception, cognition and mood. Plays a role in the regulation of behavior, including responses to anxiogenic situations and psychoactive substances. Plays a role in intestinal smooth muscle contraction, and may play a role in arterial vasoconstriction. This is 5-hydroxytryptamine receptor 2A (HTR2A) from Bos taurus (Bovine).